Reading from the N-terminus, the 164-residue chain is Cyclic pyranopterin monophosphate synthase (164 aa).

Residues 75 to 77 (MCH) and 116 to 117 (ME) each bind substrate. The active site involves aspartate 131.

This sequence belongs to the MoaC family. As to quaternary structure, homohexamer; trimer of dimers.

It carries out the reaction (8S)-3',8-cyclo-7,8-dihydroguanosine 5'-triphosphate = cyclic pyranopterin phosphate + diphosphate. It functions in the pathway cofactor biosynthesis; molybdopterin biosynthesis. In terms of biological role, catalyzes the conversion of (8S)-3',8-cyclo-7,8-dihydroguanosine 5'-triphosphate to cyclic pyranopterin monophosphate (cPMP). This Staphylococcus aureus (strain MSSA476) protein is Cyclic pyranopterin monophosphate synthase.